Reading from the N-terminus, the 329-residue chain is Lipoyl synthase (329 aa).

The tract at residues 1-23 is disordered; that stretch reads MTDLTATPAPAEPAASAYDPTAK. Cys-76, Cys-81, Cys-87, Cys-102, Cys-106, Cys-109, and Ser-316 together coordinate [4Fe-4S] cluster. In terms of domain architecture, Radical SAM core spans 87–305; the sequence is CFGKGTATFM…EEEAYKMGFT (219 aa).

The protein belongs to the radical SAM superfamily. Lipoyl synthase family. Requires [4Fe-4S] cluster as cofactor.

The protein localises to the cytoplasm. It carries out the reaction [[Fe-S] cluster scaffold protein carrying a second [4Fe-4S](2+) cluster] + N(6)-octanoyl-L-lysyl-[protein] + 2 oxidized [2Fe-2S]-[ferredoxin] + 2 S-adenosyl-L-methionine + 4 H(+) = [[Fe-S] cluster scaffold protein] + N(6)-[(R)-dihydrolipoyl]-L-lysyl-[protein] + 4 Fe(3+) + 2 hydrogen sulfide + 2 5'-deoxyadenosine + 2 L-methionine + 2 reduced [2Fe-2S]-[ferredoxin]. The protein operates within protein modification; protein lipoylation via endogenous pathway; protein N(6)-(lipoyl)lysine from octanoyl-[acyl-carrier-protein]: step 2/2. Its function is as follows. Catalyzes the radical-mediated insertion of two sulfur atoms into the C-6 and C-8 positions of the octanoyl moiety bound to the lipoyl domains of lipoate-dependent enzymes, thereby converting the octanoylated domains into lipoylated derivatives. The protein is Lipoyl synthase of Burkholderia mallei (strain NCTC 10247).